Reading from the N-terminus, the 351-residue chain is Calcium homeostasis modulator 1 (351 aa).

The Cytoplasmic portion of the chain corresponds to 1-20; that stretch reads MDKFRMMFQFLQSNQESFMN. The central pore stretch occupies residues 9–36; the sequence is QFLQSNQESFMNGICGIMALASAQMYSS. Residues 21-36 traverse the membrane as a helical segment; sequence GICGIMALASAQMYSS. Residues 37–48 are Extracellular-facing; sequence FEFSCPCMPEYN. 2 disulfides stabilise this stretch: Cys-41-Cys-126 and Cys-43-Cys-160. Residues 49 to 71 traverse the membrane as a helical segment; sequence YTYGIGLLIIPPIWFFLLGFVLN. Positions 62 to 69 are phospholipid-binding; it reads WFFLLGFV. Topologically, residues 72–98 are cytoplasmic; it reads NNVSVLAEEWKRPTGRRTKDPSVLRYM. A helical transmembrane segment spans residues 99–124; it reads LCSITQRSLIAPAVWVSVTLMDGKSF. A lipid anchor (S-palmitoyl cysteine) is attached at Cys-100. Residues 104 to 116 are phospholipid-binding; the sequence is QRSLIAPAVWVSV. Topologically, residues 125-177 are extracellular; that stretch reads LCAFSINLDIEKFGNASLVIGMTETEKLKFLARIPCKDLFEDNEVRVAATRYI. An N-linked (GlcNAc...) asparagine glycan is attached at Asn-139. A helical membrane pass occupies residues 178–203; sequence KCISQACGWMFLLMMTFTAFLIRAIR. A phospholipid-binding region spans residues 189-199; that stretch reads LLMMTFTAFLI. Residues 204–351 lie on the Cytoplasmic side of the membrane; it reads PCFTQAAFLK…KEWAVYYSKV (148 aa). Cys-205 carries the S-palmitoyl cysteine lipid modification. The interval 259 to 281 is disordered; that stretch reads HRHQSKDTSDAEEEEKQRSDEDK. The segment covering 263–281 has biased composition (basic and acidic residues); that stretch reads SKDTSDAEEEEKQRSDEDK.

Belongs to the CALHM family. Oligomerizes to form hexamers and octamers. Does not form gap junctions. Associates with CALHM3 as a pore-forming subunit in a hetero-hexameric channel complex. Post-translationally, N-glycosylated. Palmitoylated.

The protein resides in the cell membrane. It localises to the endoplasmic reticulum membrane. The protein localises to the basolateral cell membrane. It catalyses the reaction ATP(in) = ATP(out). The catalysed reaction is Ca(2+)(in) = Ca(2+)(out). The enzyme catalyses Mg(2+)(in) = Mg(2+)(out). It carries out the reaction Na(+)(in) = Na(+)(out). It catalyses the reaction K(+)(in) = K(+)(out). The catalysed reaction is Li(+)(in) = Li(+)(out). The enzyme catalyses Rb(+)(in) = Rb(+)(out). It carries out the reaction Cs(+)(in) = Cs(+)(out). It catalyses the reaction chloride(in) = chloride(out). With respect to regulation, activated in response to membrane depolarization and low extracellular Ca(2+) concentration. Inhibited by ruthenium red. Functionally, pore-forming subunit of a voltage-gated ion channel. Has poor ion selectivity and forms a wide pore that mediates permeation of small ions including Ca(2+), Na(+), K(+) and Cl(-), as well as larger ions such as ATP(4-). This Oryzias latipes (Japanese rice fish) protein is Calcium homeostasis modulator 1.